We begin with the raw amino-acid sequence, 161 residues long: Cysteine dioxygenase (161 aa).

Positions 75, 77, and 125 each coordinate Fe cation.

It belongs to the cysteine dioxygenase family. Fe cation serves as cofactor.

It carries out the reaction L-cysteine + O2 = 3-sulfino-L-alanine + H(+). The protein is Cysteine dioxygenase (cdoA) of Bacillus subtilis (strain 168).